Reading from the N-terminus, the 341-residue chain is L-threonine 3-dehydrogenase (341 aa).

Zn(2+) is bound at residue C38. Active-site charge relay system residues include T40 and H43. Positions 63, 64, 93, 96, 99, and 107 each coordinate Zn(2+). NAD(+) is bound by residues I175, D195, R200, 262-264 (LGI), and 286-287 (IY).

This sequence belongs to the zinc-containing alcohol dehydrogenase family. As to quaternary structure, homotetramer. Zn(2+) is required as a cofactor.

The protein resides in the cytoplasm. The catalysed reaction is L-threonine + NAD(+) = (2S)-2-amino-3-oxobutanoate + NADH + H(+). It functions in the pathway amino-acid degradation; L-threonine degradation via oxydo-reductase pathway; glycine from L-threonine: step 1/2. In terms of biological role, catalyzes the NAD(+)-dependent oxidation of L-threonine to 2-amino-3-ketobutyrate. This Shewanella oneidensis (strain ATCC 700550 / JCM 31522 / CIP 106686 / LMG 19005 / NCIMB 14063 / MR-1) protein is L-threonine 3-dehydrogenase.